A 586-amino-acid chain; its full sequence is Protein NRT1/ PTR FAMILY 5.3 (586 aa).

Transmembrane regions (helical) follow at residues 77–97, 100–120, 141–161, 189–209, 217–237, 334–354, 370–390, 408–428, 449–469, 492–512, and 538–558; these read WVGTSWLTPILGAYVADAHFG, ITFVISSAIYLLGMALLTLSV, ASVIQLAVFFGALYTLAIGTG, FFNWWMFSIFFGTFFATTVLV, WAIGYGLSTLGLAFSIFIFLL, PVLFVTFVPSMMLAQIMTLFI, IPPASLLGFTTFSMLVSIVIY, ITLLQRMGIGMILHILIMIIA, AVPIPLSIFTLLPQYVLMGLA, LGTSYTSTSMAVGYFMSSILL, and NYYMFFAVLNLLNFILFLVVI.

It belongs to the major facilitator superfamily. Proton-dependent oligopeptide transporter (POT/PTR) (TC 2.A.17) family. Expressed in roots and siliques.

Its subcellular location is the membrane. Its function is as follows. Peptide transporter. The sequence is that of Protein NRT1/ PTR FAMILY 5.3 (NPF5.3) from Arabidopsis thaliana (Mouse-ear cress).